A 568-amino-acid chain; its full sequence is Urease subunit alpha (568 aa).

Residues 130–568 form the Urease domain; the sequence is GGIDTHIHFI…LPMAQRYFLF (439 aa). 3 residues coordinate Ni(2+): H135, H137, and K218. N6-carboxylysine is present on K218. A substrate-binding site is contributed by H220. H247 and H273 together coordinate Ni(2+). Residue H321 is the Proton donor of the active site. D361 contributes to the Ni(2+) binding site.

This sequence belongs to the metallo-dependent hydrolases superfamily. Urease alpha subunit family. As to quaternary structure, heterotrimer of UreA (gamma), UreB (beta) and UreC (alpha) subunits. Three heterotrimers associate to form the active enzyme. It depends on Ni cation as a cofactor. Carboxylation allows a single lysine to coordinate two nickel ions.

The protein resides in the cytoplasm. The catalysed reaction is urea + 2 H2O + H(+) = hydrogencarbonate + 2 NH4(+). Its pathway is nitrogen metabolism; urea degradation; CO(2) and NH(3) from urea (urease route): step 1/1. This Burkholderia ambifaria (strain ATCC BAA-244 / DSM 16087 / CCUG 44356 / LMG 19182 / AMMD) (Burkholderia cepacia (strain AMMD)) protein is Urease subunit alpha.